A 341-amino-acid polypeptide reads, in one-letter code: Keratin-associated protein 29-1 (341 aa).

7 consecutive repeat copies span residues 5 to 9, 115 to 119, 120 to 124, 150 to 154, 240 to 244, 276 to 280, and 307 to 311. A 7 X 5 AA repeats of C-C-X(3) region spans residues 5–311; the sequence is CCPGNTTAIP…GCKSACCVTG (307 aa).

Belongs to the KRTAP type 10 family.

The chain is Keratin-associated protein 29-1 (KRTAP29-1) from Homo sapiens (Human).